Here is a 360-residue protein sequence, read N- to C-terminus: MSILNLARTNVLTLEPYQSARRIGGGSQGNIWLNANEYPQPTFYMLRSSNLNRYPDCQPQELLNSYAAYAGVQPNQVLACRGADEGIELLIRTFCEPSKDKILFCPPTYGMYRVSAETFGVAYCAIQALDNWQLDLDTIYAQLDCVKLIYICHPNNPTGNIINPSDIRQLLDITHGRTILVVDEAYIDFYPTASISSWINHYPHLVILRTLSKAFALAGLRCGFILANPDIIKLLLKVIAPYPISRPVVDIAKQALSTKGIHQTKRRVANIDINRNWLIQQLAECSCVSVVFPSVTNYLLVRFHPNYHVFQSLWKKGTILRDQNQQIGLANCLRITIGTSLECQNLLTALQALTLVSHKE.

An N6-(pyridoxal phosphate)lysine modification is found at K213.

The protein belongs to the class-II pyridoxal-phosphate-dependent aminotransferase family. Histidinol-phosphate aminotransferase subfamily. As to quaternary structure, homodimer. Pyridoxal 5'-phosphate is required as a cofactor.

It carries out the reaction L-histidinol phosphate + 2-oxoglutarate = 3-(imidazol-4-yl)-2-oxopropyl phosphate + L-glutamate. The protein operates within amino-acid biosynthesis; L-histidine biosynthesis; L-histidine from 5-phospho-alpha-D-ribose 1-diphosphate: step 7/9. The polypeptide is Histidinol-phosphate aminotransferase (Baumannia cicadellinicola subsp. Homalodisca coagulata).